The primary structure comprises 219 residues: Thiamine-phosphate synthase (219 aa).

4-amino-2-methyl-5-(diphosphooxymethyl)pyrimidine contacts are provided by residues 44–48 and asparagine 79; that span reads QFREK. Mg(2+)-binding residues include aspartate 80 and aspartate 99. Serine 117 contacts 4-amino-2-methyl-5-(diphosphooxymethyl)pyrimidine. 143–145 is a binding site for 2-[(2R,5Z)-2-carboxy-4-methylthiazol-5(2H)-ylidene]ethyl phosphate; that stretch reads TST. A 4-amino-2-methyl-5-(diphosphooxymethyl)pyrimidine-binding site is contributed by lysine 146. 2-[(2R,5Z)-2-carboxy-4-methylthiazol-5(2H)-ylidene]ethyl phosphate contacts are provided by residues glycine 175 and 195–196; that span reads IS.

This sequence belongs to the thiamine-phosphate synthase family. It depends on Mg(2+) as a cofactor.

The catalysed reaction is 2-[(2R,5Z)-2-carboxy-4-methylthiazol-5(2H)-ylidene]ethyl phosphate + 4-amino-2-methyl-5-(diphosphooxymethyl)pyrimidine + 2 H(+) = thiamine phosphate + CO2 + diphosphate. The enzyme catalyses 2-(2-carboxy-4-methylthiazol-5-yl)ethyl phosphate + 4-amino-2-methyl-5-(diphosphooxymethyl)pyrimidine + 2 H(+) = thiamine phosphate + CO2 + diphosphate. It carries out the reaction 4-methyl-5-(2-phosphooxyethyl)-thiazole + 4-amino-2-methyl-5-(diphosphooxymethyl)pyrimidine + H(+) = thiamine phosphate + diphosphate. It functions in the pathway cofactor biosynthesis; thiamine diphosphate biosynthesis; thiamine phosphate from 4-amino-2-methyl-5-diphosphomethylpyrimidine and 4-methyl-5-(2-phosphoethyl)-thiazole: step 1/1. In terms of biological role, condenses 4-methyl-5-(beta-hydroxyethyl)thiazole monophosphate (THZ-P) and 2-methyl-4-amino-5-hydroxymethyl pyrimidine pyrophosphate (HMP-PP) to form thiamine monophosphate (TMP). The polypeptide is Thiamine-phosphate synthase (Bacillus thuringiensis subsp. konkukian (strain 97-27)).